The chain runs to 50 residues: Large ribosomal subunit protein bL33 (50 aa).

It belongs to the bacterial ribosomal protein bL33 family.

This chain is Large ribosomal subunit protein bL33, found in Citrifermentans bemidjiense (strain ATCC BAA-1014 / DSM 16622 / JCM 12645 / Bem) (Geobacter bemidjiensis).